A 495-amino-acid chain; its full sequence is Cytochrome P450 710A1 (495 aa).

A helical transmembrane segment spans residues V5–V25. Heme is bound at residue C434.

The protein belongs to the cytochrome P450 family. Heme is required as a cofactor. As to expression, expressed in the vascular tissues of roots, shoots and leaves. Expressed in root tips and sepals. Very low expression in stems and siliques.

It localises to the membrane. The enzyme catalyses 5-dehydroepisterol + NADPH + O2 + H(+) = ergosta-5,7,22,24(28)-tetraen-3beta-ol + NADP(+) + 2 H2O. The protein operates within steroid biosynthesis; sterol biosynthesis. Required to form the C-22 double bond in the sterol side chain. Possesses in vitro C-22 desaturase activity toward beta-sitosterol and produces stigmasterol. No activity with campesterol. The chain is Cytochrome P450 710A1 from Arabidopsis thaliana (Mouse-ear cress).